A 142-amino-acid chain; its full sequence is Large ribosomal subunit protein uL11 (142 aa).

This sequence belongs to the universal ribosomal protein uL11 family. Part of the ribosomal stalk of the 50S ribosomal subunit. Interacts with L10 and the large rRNA to form the base of the stalk. L10 forms an elongated spine to which L12 dimers bind in a sequential fashion forming a multimeric L10(L12)X complex. One or more lysine residues are methylated.

Forms part of the ribosomal stalk which helps the ribosome interact with GTP-bound translation factors. The chain is Large ribosomal subunit protein uL11 from Colwellia psychrerythraea (strain 34H / ATCC BAA-681) (Vibrio psychroerythus).